Here is a 285-residue protein sequence, read N- to C-terminus: MLVVNNPAALREQIGQWRREGLTIAFVPTMGNLHQGHLTLVKEAHHHADKVVTSIFVNPMQFDKAEDLANYPRTLEQDCAALETAGVDMVFTPTPEIMYPQGLASHTFVEVPGLSGLLEGALRPGHFRGVSTVVTKLFNLVQPDVACFGQKDYQQLALIRKMVADMAMPIQIVGVPTVRAEDGLALSSRNGYLTTAERALAPELARTMNWIAEQIEAGDHHLPSLVAQASQRLDKAGFRTDAIDIVDAATLEAATDQSEQLVILMAAYLGKARLIDNRVVTLARS.

Residue 30 to 37 (MGNLHQGH) coordinates ATP. Histidine 37 serves as the catalytic Proton donor. A (R)-pantoate-binding site is contributed by glutamine 61. Position 61 (glutamine 61) interacts with beta-alanine. 149–152 (GQKD) lines the ATP pocket. Glutamine 155 is a (R)-pantoate binding site. ATP-binding positions include valine 178 and 186–189 (LSSR).

This sequence belongs to the pantothenate synthetase family. As to quaternary structure, homodimer.

The protein localises to the cytoplasm. It carries out the reaction (R)-pantoate + beta-alanine + ATP = (R)-pantothenate + AMP + diphosphate + H(+). Its pathway is cofactor biosynthesis; (R)-pantothenate biosynthesis; (R)-pantothenate from (R)-pantoate and beta-alanine: step 1/1. Catalyzes the condensation of pantoate with beta-alanine in an ATP-dependent reaction via a pantoyl-adenylate intermediate. The sequence is that of Pantothenate synthetase from Aeromonas hydrophila subsp. hydrophila (strain ATCC 7966 / DSM 30187 / BCRC 13018 / CCUG 14551 / JCM 1027 / KCTC 2358 / NCIMB 9240 / NCTC 8049).